Consider the following 360-residue polypeptide: Phospho-N-acetylmuramoyl-pentapeptide-transferase (360 aa).

Residues 1–25 (MLVWLAEHLVKYYSGFNVFSYLTFR) are Periplasmic-facing. Residues 26–46 (AIVSLLTALFISLWMGPRMIA) form a helical membrane-spanning segment. At 47–71 (RLQKLSFGQVVRNDGPESHFSKRGT) the chain is on the cytoplasmic side. The chain crosses the membrane as a helical span at residues 72–92 (PTMGGIMILTSIVISVLLWAY). Position 93 (Pro93) is a topological domain, periplasmic. Residues 94–114 (SNPYVWCVLVVLIGYGIIGFV) traverse the membrane as a helical segment. Residues 115-131 (DDYRKVVRKDTKGLIAR) lie on the Cytoplasmic side of the membrane. Residues 132 to 152 (WKYFWMSVIALGVAFALYLVG) traverse the membrane as a helical segment. Topologically, residues 153-167 (KDTPATQLVVPFFKD) are periplasmic. A helical membrane pass occupies residues 168–188 (VMPQLGLFYILLSYFVIVGTG). The Cytoplasmic segment spans residues 189–198 (NAVNLTDGLD). Residues 199–219 (GLAIMPTVFVAAGFALVAWAT) traverse the membrane as a helical segment. The Periplasmic portion of the chain corresponds to 220–235 (GNMNFANYLHIPYLRH). Residues 236–256 (AGELVIVCTAIVGAGLGFLWF) form a helical membrane-spanning segment. Residues 257–262 (NTYPAQ) lie on the Cytoplasmic side of the membrane. Residues 263 to 283 (VFMGDVGSLALGGALGIIAVL) traverse the membrane as a helical segment. At 284–287 (LRQE) the chain is on the periplasmic side. A helical membrane pass occupies residues 288 to 308 (FLLVIMGGVFVVETLSVILQV). At 309 to 337 (GSFKLRGQRIFRMAPIHHHYELKGWPEPR) the chain is on the cytoplasmic side. Residues 338–358 (VIVRFWIISLMLVLIGLATLK) form a helical membrane-spanning segment. At 359–360 (VR) the chain is on the periplasmic side.

Belongs to the glycosyltransferase 4 family. MraY subfamily. Requires Mg(2+) as cofactor.

It localises to the cell inner membrane. The enzyme catalyses UDP-N-acetyl-alpha-D-muramoyl-L-alanyl-gamma-D-glutamyl-meso-2,6-diaminopimeloyl-D-alanyl-D-alanine + di-trans,octa-cis-undecaprenyl phosphate = di-trans,octa-cis-undecaprenyl diphospho-N-acetyl-alpha-D-muramoyl-L-alanyl-D-glutamyl-meso-2,6-diaminopimeloyl-D-alanyl-D-alanine + UMP. Its pathway is cell wall biogenesis; peptidoglycan biosynthesis. Functionally, catalyzes the initial step of the lipid cycle reactions in the biosynthesis of the cell wall peptidoglycan: transfers peptidoglycan precursor phospho-MurNAc-pentapeptide from UDP-MurNAc-pentapeptide onto the lipid carrier undecaprenyl phosphate, yielding undecaprenyl-pyrophosphoryl-MurNAc-pentapeptide, known as lipid I. The protein is Phospho-N-acetylmuramoyl-pentapeptide-transferase of Salmonella gallinarum (strain 287/91 / NCTC 13346).